A 180-amino-acid polypeptide reads, in one-letter code: Cytokinin-beta-glucosidase 2 (180 aa).

Hydrolyzes cytokinin glucosides thus liberating free cytokinins. The sequence is that of Cytokinin-beta-glucosidase 2 (ROLC2) from Panax ginseng (Korean ginseng).